Here is a 311-residue protein sequence, read N- to C-terminus: Olfactory receptor 5L2 (311 aa).

Residues 1-25 (MGKENCTTVAEFILLGLSDVPELRV) lie on the Extracellular side of the membrane. N-linked (GlcNAc...) asparagine glycosylation is present at N5. The helical transmembrane segment at 26-46 (CLFLLFLLIYGVTLLANLGMT) threads the bilayer. The Cytoplasmic portion of the chain corresponds to 47-54 (ALIQVSSR). Residues 55 to 75 (LHTPVYFFLSHLSFVDFCYSS) traverse the membrane as a helical segment. Residues 76–99 (IIVPKMLANIFNKDKAISFLGCMV) lie on the Extracellular side of the membrane. C97 and C189 are joined by a disulfide. Residues 100-120 (QFYLFCTCGVTEVFLLAVMAY) traverse the membrane as a helical segment. The Cytoplasmic segment spans residues 121 to 139 (DRFVAICNPLLYMVTMSQK). A helical transmembrane segment spans residues 140 to 160 (LRVELTSCCYFCGTVCSLIHS). Over 161–196 (SLALRILFYRSNVINHFFCDLPPLLSLACSDVTVNE) the chain is Extracellular. N195 is a glycosylation site (N-linked (GlcNAc...) asparagine). Residues 197 to 217 (TLLFLVATLNESVTIMIILTS) form a helical membrane-spanning segment. Over 218 to 237 (YLLILTTILKIHSAESRHKA) the chain is Cytoplasmic. A helical membrane pass occupies residues 238 to 258 (FSTCASHLTAITVSHGTILYI). Topologically, residues 259-271 (YCRPSSGNSGDVD) are extracellular. Residues 272–292 (KVATVFYTVVIPMLNPLIYSL) traverse the membrane as a helical segment. The Cytoplasmic segment spans residues 293–311 (RNKDVNKALRKVMGSKIHS).

Belongs to the G-protein coupled receptor 1 family.

The protein localises to the cell membrane. Its function is as follows. Odorant receptor. In Homo sapiens (Human), this protein is Olfactory receptor 5L2 (OR5L2).